The chain runs to 521 residues: Medium/long-chain-fatty-acid--[acyl-carrier-protein] ligase MbtM (521 aa).

The protein belongs to the ATP-dependent AMP-binding enzyme family.

The enzyme catalyses a long-chain fatty acid + holo-[ACP] + ATP = a long-chain fatty acyl-[ACP] + AMP + diphosphate. The catalysed reaction is a medium-chain fatty acid + holo-[ACP] + ATP = a medium-chain fatty acyl-[ACP] + AMP + diphosphate. It participates in siderophore biosynthesis; mycobactin biosynthesis. Its function is as follows. Activates lipidic moieties required for mycobactin biosynthesis. Converts medium- to long-chain aliphatic fatty acids into acyl adenylate, which is further transferred on to the phosphopantetheine arm of the carrier protein MbtL. This chain is Medium/long-chain-fatty-acid--[acyl-carrier-protein] ligase MbtM (mbtM), found in Mycobacterium bovis (strain ATCC BAA-935 / AF2122/97).